The following is a 185-amino-acid chain: MKKQDLSVKNVVAMGIGSAIYVILTRFTSIPTPIPNTNIELVFPFLALFAAIYGAKVGFAVGFIGHTLSDFIMYGQTWWSWVLATGVLGLIIGLASKKLDLKNGIFGIKQILLFNIVQIFANIIAWIVVAPIGDIIIYSEPANKVFVQGISATLSNGITILVVGTLLLKAYAGTKIKKGSLRKED.

Helical transmembrane passes span 11–31 (VVAM…TSIP), 45–65 (FLAL…GFIG), 72–92 (IMYG…GLII), 111–131 (ILLF…VVAP), and 145–165 (VFVQ…VVGT).

The protein belongs to the UPF0397 family.

It is found in the cell membrane. The polypeptide is UPF0397 protein lhv_0999 (Lactobacillus helveticus (strain DPC 4571)).